Here is a 202-residue protein sequence, read N- to C-terminus: Glycerol-3-phosphate acyltransferase (202 aa).

A run of 6 helical transmembrane segments spans residues 3-23 (NLII…LILA), 61-81 (IATI…LKFL), 87-107 (LLWS…YLLF), 118-138 (GAMI…WVVI), 144-164 (ISSL…FIFN), and 167-187 (LEIH…YKHL).

The protein belongs to the PlsY family. Probably interacts with PlsX.

Its subcellular location is the cell inner membrane. It carries out the reaction an acyl phosphate + sn-glycerol 3-phosphate = a 1-acyl-sn-glycero-3-phosphate + phosphate. The protein operates within lipid metabolism; phospholipid metabolism. In terms of biological role, catalyzes the transfer of an acyl group from acyl-phosphate (acyl-PO(4)) to glycerol-3-phosphate (G3P) to form lysophosphatidic acid (LPA). This enzyme utilizes acyl-phosphate as fatty acyl donor, but not acyl-CoA or acyl-ACP. The protein is Glycerol-3-phosphate acyltransferase of Campylobacter jejuni subsp. jejuni serotype O:6 (strain 81116 / NCTC 11828).